Here is a 277-residue protein sequence, read N- to C-terminus: 3-methyl-2-oxobutanoate hydroxymethyltransferase (277 aa).

Positions 43 and 82 each coordinate Mg(2+). 3-methyl-2-oxobutanoate-binding positions include 43-44, D82, and K112; that span reads DS. E114 provides a ligand contact to Mg(2+). E181 serves as the catalytic Proton acceptor.

The protein belongs to the PanB family. In terms of assembly, homodecamer; pentamer of dimers. The cofactor is Mg(2+).

It localises to the cytoplasm. The enzyme catalyses 3-methyl-2-oxobutanoate + (6R)-5,10-methylene-5,6,7,8-tetrahydrofolate + H2O = 2-dehydropantoate + (6S)-5,6,7,8-tetrahydrofolate. It functions in the pathway cofactor biosynthesis; (R)-pantothenate biosynthesis; (R)-pantoate from 3-methyl-2-oxobutanoate: step 1/2. Catalyzes the reversible reaction in which hydroxymethyl group from 5,10-methylenetetrahydrofolate is transferred onto alpha-ketoisovalerate to form ketopantoate. In Exiguobacterium sp. (strain ATCC BAA-1283 / AT1b), this protein is 3-methyl-2-oxobutanoate hydroxymethyltransferase.